A 467-amino-acid polypeptide reads, in one-letter code: ESX-4 secretion system protein eccD4 (467 aa).

11 helical membrane-spanning segments follow: residues 122–142 (GALAASCITAGGGLMLVRNAL), 152–172 (ATAGVVAAAGLAALLFAVIAC), 186–206 (VIATIFGAVAGLLAVPGVPGV), 209–229 (VLVAAMAAAATSVLAMRITGC), 241–261 (AVVVAAATLVGAITAAPVPAI), 264–284 (LATLASFGLLEVSARMAVLLA), 319–339 (LTSLLAAFAASATIGAIGTAV), 344–364 (IHRSSMGGIALAAVTGALLLL), 374–394 (SLVFAICGITTVATAFTVAAD), 401–421 (PWIAALTAMLAAVAMFLGFVA), and 439–459 (CLALIAMVPLTAWLCGAYSAV).

The protein belongs to the EccD/Snm4 family. In terms of assembly, part of the ESX-4 / type VII secretion system (T7SS), which is composed of cytosolic and membrane components.

It is found in the cell membrane. The protein is ESX-4 secretion system protein eccD4 (eccD4) of Mycobacterium tuberculosis (strain CDC 1551 / Oshkosh).